Reading from the N-terminus, the 245-residue chain is 1-(5-phosphoribosyl)-5-[(5-phosphoribosylamino)methylideneamino] imidazole-4-carboxamide isomerase (245 aa).

Asp8 acts as the Proton acceptor in catalysis. Asp130 serves as the catalytic Proton donor.

Belongs to the HisA/HisF family.

It is found in the cytoplasm. The catalysed reaction is 1-(5-phospho-beta-D-ribosyl)-5-[(5-phospho-beta-D-ribosylamino)methylideneamino]imidazole-4-carboxamide = 5-[(5-phospho-1-deoxy-D-ribulos-1-ylimino)methylamino]-1-(5-phospho-beta-D-ribosyl)imidazole-4-carboxamide. It functions in the pathway amino-acid biosynthesis; L-histidine biosynthesis; L-histidine from 5-phospho-alpha-D-ribose 1-diphosphate: step 4/9. The protein is 1-(5-phosphoribosyl)-5-[(5-phosphoribosylamino)methylideneamino] imidazole-4-carboxamide isomerase of Pseudomonas putida (strain ATCC 700007 / DSM 6899 / JCM 31910 / BCRC 17059 / LMG 24140 / F1).